The sequence spans 423 residues: E3 ubiquitin-protein ligase makorin-2 (423 aa).

C3H1-type zinc fingers lie at residues 2 to 29 and 31 to 58; these read STKQ…HDLN and SKPS…HIKP. Positions 59 to 90 are disordered; the sequence is SSRGGGGGAPEDQAGGGGAGGGGAGIGGAGGG. The span at 61 to 90 shows a compositional bias: gly residues; it reads RGGGGGAPEDQAGGGGAGGGGAGIGGAGGG. The C3H1-type 3 zinc finger occupies 162–189; it reads QNLPQLCPYAANGHCFYEENCTYLHGDL. Positions 190 to 219 are makorin-type Cys-His; sequence CEVCGLQVLHPHDSEQRRAHEKMCLAAFEA. An RING-type zinc finger spans residues 235-289; the sequence is CSICMEVVVQKANPSDRRFGILSSCCHTFCLACIRKWRCTRTFSNTIIKSCPECR. The C3H1-type 4 zinc finger occupies 318 to 347; the sequence is GVSKKACKYFDQGRGSCPFGGKCLYLHAFP.

It is found in the cytoplasm. It localises to the nucleus. It catalyses the reaction S-ubiquitinyl-[E2 ubiquitin-conjugating enzyme]-L-cysteine + [acceptor protein]-L-lysine = [E2 ubiquitin-conjugating enzyme]-L-cysteine + N(6)-ubiquitinyl-[acceptor protein]-L-lysine.. It participates in protein modification; protein ubiquitination. Its function is as follows. E3 ubiquitin ligase catalyzing the covalent attachment of ubiquitin moieties onto substrate proteins. Inhibits neurogenesis and axis formation during embryonic development by modulating the phosphatidylinositol 3-kinase (PI3K) pathway. Acts downstream of PI3K and akt1 to up-regulate gsk3b mRNA expression. The protein is E3 ubiquitin-protein ligase makorin-2 (mkrn2) of Seriola quinqueradiata (Five-ray yellowtail).